The chain runs to 463 residues: MDSRDAPEVPGIRQPANVTTDLKMIICKLLNSPKPAKTFPGSQPVSFQHVDIEEKLLAQDYYVCEKTDGLRALMLIIMNPVTKEQGCFLIDRENNYYLLNGFRFPRLPRANRKELLETLQDGTLVDGELVVQTNPATRLRELRYLMFDCLAINGRALVQSPTSSRLAHLGKEFYKPYYDLRAYYPDRCATFPFKLSMKHMNFSFDLDRVAGSLDKLPHVSDGLIFTAVDTPYTVGGKDSTLLKWKPEQENTVDFKMILEIPVVEDDTLPKKDRNRFYYNFDVKPSFHLYIWQGGPDVNTRLHDFEQPFSKKELEILHRTYKVFAELQISDEQWAKMKALEQPLNGRIVECAKDQETGEWKFLRFRDDKLNGNHVSVVQKVLESISDSVKLEDLEHMIPRIKARWEERKSKKRTHSSISGPMLPPVAETKAPREATQSRYIDDEDWSDEADDDDEDSLKRARIE.

The active-site N6-GMP-lysine intermediate is the Lys-66. Residues 404–463 are disordered; sequence WEERKSKKRTHSSISGPMLPPVAETKAPREATQSRYIDDEDWSDEADDDDEDSLKRARIE. Residues 441–455 show a composition bias toward acidic residues; sequence DDEDWSDEADDDDED.

Belongs to the eukaryotic GTase family. Heterodimer. The mRNA-capping enzyme is composed of two separate chains alpha and beta, respectively a mRNA guanylyltransferase and an mRNA 5'-triphosphate monophosphatase.

The protein resides in the nucleus. It carries out the reaction a 5'-end diphospho-ribonucleoside in mRNA + GTP + H(+) = a 5'-end (5'-triphosphoguanosine)-ribonucleoside in mRNA + diphosphate. Its function is as follows. Second step of mRNA capping. Transfer of the GMP moiety of GTP to the 5'-end of RNA via an enzyme-GMP covalent reaction intermediate. The polypeptide is mRNA-capping enzyme subunit alpha (CEG1) (Eremothecium gossypii (strain ATCC 10895 / CBS 109.51 / FGSC 9923 / NRRL Y-1056) (Yeast)).